A 667-amino-acid polypeptide reads, in one-letter code: Polypeptide N-acetylgalactosaminyltransferase 3 (667 aa).

Residues methionine 1 to tryptophan 12 lie on the Cytoplasmic side of the membrane. A helical; Signal-anchor for type II membrane protein transmembrane segment spans residues leucine 13–alanine 35. The Lumenal portion of the chain corresponds to serine 36–methionine 667. N-linked (GlcNAc...) asparagine glycosylation is found at asparagine 75 and asparagine 129. 5 disulfide bridges follow: cysteine 140/cysteine 375, cysteine 366/cysteine 446, cysteine 526/cysteine 547, cysteine 572/cysteine 601, and cysteine 626/cysteine 649. The tract at residues leucine 149–arginine 259 is catalytic subdomain A. Aspartate 190 and arginine 220 together coordinate substrate. Mn(2+) contacts are provided by aspartate 243 and histidine 245. N-linked (GlcNAc...) asparagine glycosylation is found at asparagine 279 and asparagine 313. Residues proline 321–arginine 383 form a catalytic subdomain B region. Residue tryptophan 352 participates in substrate binding. Histidine 380 serves as a coordination point for Mn(2+). Arginine 383 and tyrosine 388 together coordinate substrate. N-linked (GlcNAc...) asparagine glycosylation occurs at asparagine 433. Residues glutamate 513–isoleucine 661 form the Ricin B-type lectin domain. Residue asparagine 590 is glycosylated (N-linked (GlcNAc...) asparagine).

The protein belongs to the glycosyltransferase 2 family. GalNAc-T subfamily. The cofactor is Mn(2+). In terms of tissue distribution, expressed in developing oocytes and egg chambers. During embryonic stages 9-11, expressed in the primordiums of the foregut, midgut and hindgut. During embryonic stages 12-13, expression is found uniquely in the posterior spiracle. During embryonic stages 14-17, expressed in the pharynx, esophagus and posterior spiracles. Expression observed in the epidermis during embryonic stages 16-17. In third instar larvae, expressed ubiquitously in wing, with increased expression in pleura and notum, eye-antennal, leg and haltere imaginal disks.

The protein resides in the golgi apparatus membrane. It catalyses the reaction L-seryl-[protein] + UDP-N-acetyl-alpha-D-galactosamine = a 3-O-[N-acetyl-alpha-D-galactosaminyl]-L-seryl-[protein] + UDP + H(+). The catalysed reaction is L-threonyl-[protein] + UDP-N-acetyl-alpha-D-galactosamine = a 3-O-[N-acetyl-alpha-D-galactosaminyl]-L-threonyl-[protein] + UDP + H(+). It participates in protein modification; protein glycosylation. Catalyzes the initial reaction in O-linked oligosaccharide biosynthesis, the transfer of an N-acetyl-D-galactosamine residue to a serine or threonine residue on the protein receptor. It can both act as a peptide transferase that transfers GalNAc onto unmodified peptide substrates, and as a glycopeptide transferase that requires the prior addition of a GalNAc on a peptide before adding additional GalNAc moieties. Prefers EA2 as substrate. Has weak activity toward Muc5AC-3, -13 and -3/13 substrates. Plays a critical role in the regulation of integrin-mediated cell adhesion during wing development by influencing, via glycosylation, the secretion and localization of the integrin ligand Tig to the basal cell layer interface. Might have a role in protein O-glycosylation in the Golgi and thereby in establishing and/or maintaining a proper secretory apparatus structure. Together with Pgant35A, regulates integrin levels and activity-dependent integrin signaling at the synapse in neurons and muscles. In Drosophila melanogaster (Fruit fly), this protein is Polypeptide N-acetylgalactosaminyltransferase 3.